We begin with the raw amino-acid sequence, 395 residues long: MAKEKFDRSKTHANIGTIGHVDHGKTTLTAAIATVLSKKMGGTAKSYADIDNAPEEKERGITINTSHVEYETETRHYAHVDCPGHADYVKNMITGAAQMDGGILVVSAADGPMPQTREHILLSRQVGVPYLVVFMNKCDMVDDEELLELVEMEIRDLLSEYDFPGDDIPVIKGSALKALEGEPEWEEKIVELMDAVDSYIPTPERQTDKPFMMPVEDVFSITGRGTVATGRVERGQVKVGDVVEIIGIAEEAKSTTVTGVEMFRKLLDYAEAGDNIGALLRGVAREEIQRGQVLAKPGSITPHTNFKAEVYVLSKEEGGRHTPFFSNYRPQFYFRTTDVTGICNLPEGVEMVMPGDNIEMTVELIAPIALEEGTKFSIREGGRTVGAGVVASIQK.

A tr-type G domain is found at 10-204 (KTHANIGTIG…AVDSYIPTPE (195 aa)). Residues 19–26 (GHVDHGKT) form a G1 region. A GTP-binding site is contributed by 19–26 (GHVDHGKT). Residue T26 participates in Mg(2+) binding. The G2 stretch occupies residues 60 to 64 (GITIN). A G3 region spans residues 81–84 (DCPG). Residues 81 to 85 (DCPGH) and 136 to 139 (NKCD) contribute to the GTP site. A G4 region spans residues 136 to 139 (NKCD). Residues 174-176 (SAL) are G5.

The protein belongs to the TRAFAC class translation factor GTPase superfamily. Classic translation factor GTPase family. EF-Tu/EF-1A subfamily. As to quaternary structure, monomer.

The protein resides in the cytoplasm. It carries out the reaction GTP + H2O = GDP + phosphate + H(+). GTP hydrolase that promotes the GTP-dependent binding of aminoacyl-tRNA to the A-site of ribosomes during protein biosynthesis. The chain is Elongation factor Tu from Lysinibacillus sphaericus (strain C3-41).